The following is a 156-amino-acid chain: Ribosomal RNA large subunit methyltransferase H (156 aa).

Residues Leu-73, Gly-104, and Leu-123–Leu-128 contribute to the S-adenosyl-L-methionine site.

The protein belongs to the RNA methyltransferase RlmH family. As to quaternary structure, homodimer.

Its subcellular location is the cytoplasm. It carries out the reaction pseudouridine(1915) in 23S rRNA + S-adenosyl-L-methionine = N(3)-methylpseudouridine(1915) in 23S rRNA + S-adenosyl-L-homocysteine + H(+). Specifically methylates the pseudouridine at position 1915 (m3Psi1915) in 23S rRNA. The sequence is that of Ribosomal RNA large subunit methyltransferase H from Shewanella frigidimarina (strain NCIMB 400).